The primary structure comprises 397 residues: Acetate kinase (397 aa).

A Mg(2+)-binding site is contributed by asparagine 7. Lysine 14 is an ATP binding site. Arginine 91 is a substrate binding site. The active-site Proton donor/acceptor is aspartate 148. ATP is bound by residues 208 to 212 (HLGNG), 283 to 285 (DLR), and 331 to 335 (GVGEN). Glutamate 384 is a Mg(2+) binding site.

The protein belongs to the acetokinase family. In terms of assembly, homodimer. Mg(2+) is required as a cofactor. The cofactor is Mn(2+).

Its subcellular location is the cytoplasm. It catalyses the reaction acetate + ATP = acetyl phosphate + ADP. Its pathway is metabolic intermediate biosynthesis; acetyl-CoA biosynthesis; acetyl-CoA from acetate: step 1/2. Functionally, catalyzes the formation of acetyl phosphate from acetate and ATP. Can also catalyze the reverse reaction. In Syntrophomonas wolfei subsp. wolfei (strain DSM 2245B / Goettingen), this protein is Acetate kinase.